The primary structure comprises 283 residues: NAD kinase (283 aa).

The active-site Proton acceptor is the Asp73. NAD(+)-binding positions include 73-74 (DG), 146-147 (NE), His157, His176, Asp178, 189-194 (TAYNLS), and Ala213.

It belongs to the NAD kinase family. A divalent metal cation serves as cofactor.

The protein localises to the cytoplasm. The enzyme catalyses NAD(+) + ATP = ADP + NADP(+) + H(+). Its function is as follows. Involved in the regulation of the intracellular balance of NAD and NADP, and is a key enzyme in the biosynthesis of NADP. Catalyzes specifically the phosphorylation on 2'-hydroxyl of the adenosine moiety of NAD to yield NADP. In Haloarcula marismortui (strain ATCC 43049 / DSM 3752 / JCM 8966 / VKM B-1809) (Halobacterium marismortui), this protein is NAD kinase.